The primary structure comprises 574 residues: MELPILKTNAITAILAAVTLCFASSQNITEEFYQSTCSAVSKGYLSALRTGWYTSVITIELSNIKENKCNGTDAKVKLIKQELDKYKSAVTELQLLMQSTPATNNRARRELPRFMNYTLNNTKNTNVTLSKKRKRRFLGFLLGVGSAIASGIAVSKVLHLEGEVNKIKSALLSTNKAVVSLSNGVSVLTSKVLDLKNYIDKQLLPIVNKQSCSISNIETVIEFQQKNNRLLEITREFSVNAGVTTPVSTYMLTNSELLSLINDMPITNDQKKLMSNNVQIVRQQSYSIMSIIKEEVLAYVVQLPLYGVIDTPCWKLHTSPLCTTNTKEGSNICLTRTDRGWYCDNAGSVSFFPLAETCKVQSNRVFCDTMNSLTLPSEVNLCNIDIFNPKYDCKIMTSKTDVSSSVITSLGAIVSCYGKTKCTASNKDRGIIKTFSNGCDYVSNKGVDTVSVGNTLYYVNKQEGKSLYVKGEPIINFYDPLVFPSDEFDASISQVNEKINQSLAFIRKSDELLHNVNAGKSTTNIMITTIIIVIIVILLSLIAVGLLLYCKARSTPVTLSKDQLSGINNIAFSN.

The N-terminal stretch at M1–S25 is a signal peptide. Topologically, residues Q26 to N524 are extracellular. Residues N27 and N70 are each glycosylated (N-linked (GlcNAc...) asparagine; by host). Disulfide bonds link C37/C439, C69/C212, C313/C343, C322/C333, C358/C367, C382/C393, and C416/C422. Residues V76–L96 adopt a coiled-coil conformation. N-linked (GlcNAc...) asparagine; by host glycans are attached at residues N116, N120, and N126. The tract at residues F137–V157 is fusion peptide. A coiled-coil region spans residues A153 to K209. A coiled-coil region spans residues L481–V516. N-linked (GlcNAc...) asparagine; by host glycosylation occurs at N500. Residues I525–C550 form a helical membrane-spanning segment. Residue C550 is the site of S-palmitoyl cysteine; by host attachment. The Cytoplasmic segment spans residues K551–N574.

Belongs to the paramyxoviruses fusion glycoprotein family. In terms of assembly, homotrimer. Heterodimer with fusion protein F2; disulfide-linked. Interacts with host NCL; this interaction plays a role in viral entry into the host cell. As a heterodimer with F2, interacts with host heparan sulfate. As a heterodimer with F2, interacts with host IGF1R; this interaction activates PRKCZ/PKCzeta that recruits NCL/nucleolin from the host nucleus to the plasma membrane. Part of a complex composed of F1, F2 and G glycoproteins. As a heterodimer with F2, interacts with host RHOA; this interaction facilitates virus-induced syncytium formation. As to quaternary structure, homotrimer. Heterodimer with fusion protein F1; disulfide-linked. As a heterodimer with F1, interacts with host heparan sulfate. As a heterodimer with F1, interacts with host IGF1R; this interaction activates PRKCZ/PKCzeta that recruits NCL/nucleolin from the host nucleus to the plasma membrane. Part of a complex composed of F1, F2 and G glycoproteins. As a heterodimer with F1, interacts with host RHOA; this interaction facilitates virus-induced syncytium formation. The F glycoprotein is synthesized as a F0 inactive precursor that is heavily N-glycosylated and processed at two sites by a host furin-like protease probably in the Golgi. The cleavage site between p27 and F1 may occur after endocytosis to yield the mature F1 and F2 proteins. Both cleavages are required for membrane fusion and p27 is released from the processed protein.

Its subcellular location is the host Golgi apparatus membrane. It is found in the virion membrane. The protein resides in the host cell membrane. Inactive precursor that is cleaved at two sites by a furin-like protease to give rise to the mature F1 and F2 fusion glycoproteins. Its function is as follows. Class I viral fusion protein. Under the current model, the protein has at least 3 conformational states: pre-fusion native state, pre-hairpin intermediate state, and post-fusion hairpin state. During viral and plasma cell membrane fusion, the coiled coil regions assume a trimer-of-hairpins structure, positioning the fusion peptide in close proximity to the C-terminal region of the ectodomain. The formation of this structure appears to drive apposition and subsequent fusion of viral and cellular membranes leading to delivery of the nucleocapsid into the cytoplasm. This fusion is pH independent and occurs at the plasma or endosomal membrane. The trimer of F1-F2 (F protein) also facilitates the attachment to host cell by binding to host heparan sulfate. F protein is involved in the entry into the host cell through the interaction with host IGF1R. This interaction activates PRKCZ/PKCzeta that recruits host NCL/nucleolin to the apical cell surface where it can bind fusion glycoprotein F1. Later in infection, F protein expressed at the plasma membrane of infected cells can mediate fusion with adjacent cells to form syncytia, a cytopathic effect that could lead to tissue necrosis. F protein may trigger p53-dependent apoptosis. In terms of biological role, major determinant of the species specificity of RSV infection. The trimer of F1-F2 (F protein) also facilitates the attachment to host cell by binding to host heparan sulfate. F protein is involved in the entry into the host cell through the interaction with host IGF1R. This interaction activates PRKCZ/PKCzeta that recruits host NCL/nucleolin to the apical cell surface where it can bind fusion glycoprotein F1. Later in infection, F protein expressed at the plasma membrane of infected cells can mediate fusion with adjacent cells to form syncytia, a cytopathic effect that could lead to tissue necrosis. F protein seems to trigger p53-dependent apoptosis. In Human respiratory syncytial virus A (strain RSS-2), this protein is Fusion glycoprotein F0 (F).